A 300-amino-acid chain; its full sequence is Free fatty acid receptor 1 (300 aa).

Topologically, residues 1–8 (MDLPPQLS) are extracellular. Residues 9–31 (FALYVSAFALGFPLNLLAIRGAV) traverse the membrane as a helical segment. Topologically, residues 32 to 41 (SHAKLRLTPS) are cytoplasmic. A helical transmembrane segment spans residues 42–64 (LVYTLHLACSDLLLAITLPLKAV). The Extracellular segment spans residues 65–79 (EALASGVWPLPLPFC). An intrachain disulfide couples Cys-79 to Cys-170. A helical membrane pass occupies residues 80–101 (PVFALAHFAPLYAGGGFLAALS). The Cytoplasmic portion of the chain corresponds to 102 to 121 (AGRYLGAAFPFGYQAIRRPC). Residues 122-142 (YSWGVCVAIWALVLCHLGLAL) traverse the membrane as a helical segment. Residues 143–178 (GLEAPRGWVDNTTSSLGINIPVNGSPVCLEAWDPDS) lie on the Extracellular side of the membrane. Asn-153 carries N-linked (GlcNAc...) asparagine glycosylation. A helical membrane pass occupies residues 179–200 (ARPARLSFSILLFFLPLVITAF). Topologically, residues 201–223 (CYVGCLRALVHSGLSHKRKLRAA) are cytoplasmic. A helical membrane pass occupies residues 224–248 (WVAGGALLTLLLCLGPYNASNVASF). At 249–256 (INPDLEGS) the chain is on the extracellular side. A helical transmembrane segment spans residues 257-279 (WRKLGLITGAWSVVLNPLVTGYL). At 280-300 (GTGPGQGTICVTRTPRGTIQK) the chain is on the cytoplasmic side.

Belongs to the G-protein coupled receptor 1 family. As to expression, expressed abundantly in pancreatic beta cells.

The protein resides in the cell membrane. Its function is as follows. G-protein coupled receptor for medium and long chain saturated and unsaturated fatty acids that plays an important role in glucose homeostasis. Fatty acid binding increases glucose-stimulated insulin secretion, and may also enhance the secretion of glucagon-like peptide 1 (GLP-1). May also play a role in bone homeostasis; receptor signaling activates pathways that inhibit osteoclast differentiation. Ligand binding leads to a conformation change that triggers signaling via G-proteins that activate phospholipase C, leading to an increase of the intracellular calcium concentration. Seems to act through a G(q) and G(i)-mediated pathway. Mediates the anti-inflammatory effects of omega-3 polyunsaturated fatty acids (PUFAs) via inhibition of NLRP3 inflammasome activation. The protein is Free fatty acid receptor 1 (Ffar1) of Rattus norvegicus (Rat).